Reading from the N-terminus, the 147-residue chain is uncharacterized protein (147 aa).

Residues 1-37 (MVALFKSSLGRPEQHQTPQIRISPASSNVEHSEKQPR) form a disordered region. The span at 15 to 29 (HQTPQIRISPASSNV) shows a compositional bias: polar residues. Residues 71 to 147 (PIPVTKEELA…LKTSFVGFLV (77 aa)) form the Cytochrome b5 heme-binding domain. Heme-binding residues include H106 and H129.

Belongs to the cytochrome b5 family.

This is an uncharacterized protein from Schizosaccharomyces pombe (strain 972 / ATCC 24843) (Fission yeast).